The primary structure comprises 843 residues: Urease (843 aa).

The 444-residue stretch at glycine 400 to phenylalanine 843 folds into the Urease domain. Ni(2+)-binding residues include histidine 405, histidine 407, and lysine 488. An N6-carboxylysine modification is found at lysine 488. Substrate is bound at residue histidine 490. Ni(2+)-binding residues include histidine 517 and histidine 543. The active-site Proton donor is the histidine 591. Aspartate 631 is a Ni(2+) binding site.

The protein in the C-terminal section; belongs to the metallo-dependent hydrolases superfamily. Urease alpha subunit family. Homohexamer. Other oligomeric forms may exist depending on pH and presence of salts. Ni(2+) is required as a cofactor. Post-translationally, carboxylation allows a single lysine to coordinate two nickel ions.

The catalysed reaction is urea + 2 H2O + H(+) = hydrogencarbonate + 2 NH4(+). The protein operates within nitrogen metabolism; urea degradation; CO(2) and NH(3) from urea (urease route): step 1/1. In terms of biological role, urea hydrolase involved in nitrogen recycling from ureide, purine, and arginine catabolism. This is Urease from Oryza sativa subsp. indica (Rice).